The following is a 305-amino-acid chain: Translation initiation factor eIF2B subunit alpha (305 aa).

N6-acetyllysine is present on Lys35.

It belongs to the eIF-2B alpha/beta/delta subunits family. As to quaternary structure, component of the translation initiation factor 2B (eIF2B) complex which is a heterodecamer of two sets of five different subunits: alpha, beta, gamma, delta and epsilon. Subunits alpha, beta and delta comprise a regulatory subcomplex and subunits epsilon and gamma comprise a catalytic subcomplex. Within the complex, the hexameric regulatory complex resides at the center, with the two heterodimeric catalytic subcomplexes bound on opposite sides.

It is found in the cytoplasm. It localises to the cytosol. With respect to regulation, activated by the chemical integrated stress response (ISR) inhibitor ISRIB which stimulates guanine nucleotide exchange factor activity for both phosphorylated and unphosphorylated eIF2. Acts as a component of the translation initiation factor 2B (eIF2B) complex, which catalyzes the exchange of GDP for GTP on eukaryotic initiation factor 2 (eIF2) gamma subunit. Its guanine nucleotide exchange factor activity is repressed when bound to eIF2 complex phosphorylated on the alpha subunit, thereby limiting the amount of methionyl-initiator methionine tRNA available to the ribosome and consequently global translation is repressed. The polypeptide is Translation initiation factor eIF2B subunit alpha (EIF2B1) (Pongo abelii (Sumatran orangutan)).